Consider the following 772-residue polypeptide: Endoplasmic reticulum membrane sensor NFE2L1 (772 aa).

Residues 7-24 traverse the membrane as a helical; Signal-anchor for type II membrane protein segment; the sequence is YFTEGLIQFTILLSLIGV. The tract at residues 191–199 is cholesterol recognition/amino acid consensus (CRAC) region; the sequence is IFDYSHRQK. The span at 198 to 216 shows a compositional bias: basic and acidic residues; that stretch reads QKESEVDKELSDGRERGDG. A disordered region spans residues 198–223; the sequence is QKESEVDKELSDGRERGDGWRSAGGQ. Asparagine 332, asparagine 340, asparagine 362, asparagine 402, asparagine 407, asparagine 414, asparagine 425, and asparagine 429 each carry an N-linked (GlcNAc...) asparagine glycan. The tract at residues 472–531 is disordered; that stretch reads EEEFDSDSGLSLDSGHSPASLSSSEASSSSSSSSSSSSSSSSSSSSFSEEGAVGYSSDSE. Residues 478–519 show a composition bias toward low complexity; sequence DSGLSLDSGHSPASLSSSEASSSSSSSSSSSSSSSSSSSSFS. Asparagine 574 carries N-linked (GlcNAc...) asparagine glycosylation. The tract at residues 581–613 is disordered; the sequence is PGTLDPEEPKLPSVGKKSSKEKPSEFLDKQMSR. Positions 598 to 613 are enriched in basic and acidic residues; it reads SSKEKPSEFLDKQMSR. The region spanning 654–717 is the bZIP domain; sequence LIRDIRRRGK…RQMKQKVQNL (64 aa). The tract at residues 656 to 675 is basic motif; it reads RDIRRRGKNKMAAQNCRKRK. The segment at 682–696 is leucine-zipper; sequence LERDVEDLQRDKSKL. The Nuclear localization signal signature appears at 761-768; sequence RRQERKQK.

This sequence belongs to the bZIP family. CNC subfamily. As to quaternary structure, interacts (via the bZIP domain) with small MAF protein (MAFF, MAFG or MAFK); required for binding to antioxidant response elements (AREs) on DNA. Cleaved at Leu-104 following retrotranslocation, releasing the protein from the endoplasmic reticulum membrane and forming the transcription factor NRF1 that translocates into the nucleus.

The protein resides in the endoplasmic reticulum membrane. It localises to the nucleus. Its function is as follows. Endoplasmic reticulum membrane sensor that translocates into the nucleus in response to various stresses to act as a transcription factor. Constitutes a precursor of the transcription factor NRF1. Able to detect various cellular stresses, such as cholesterol excess, oxidative stress or proteasome inhibition. In response to stress, it is released from the endoplasmic reticulum membrane following cleavage and translocates into the nucleus to form the transcription factor NRF1. Acts as a key sensor of cholesterol excess: in excess cholesterol conditions, the endoplasmic reticulum membrane form of the protein directly binds cholesterol via its CRAC motif, preventing cleavage and release of the transcription factor NRF1, thereby allowing expression of genes promoting cholesterol removal. Involved in proteasome homeostasis: in response to proteasome inhibition, it is released from the endoplasmic reticulum membrane, translocates to the nucleus and activates expression of genes encoding proteasome subunits. CNC-type bZIP family transcription factor that translocates to the nucleus and regulates expression of target genes in response to various stresses. Heterodimerizes with small-Maf proteins (MAFF, MAFG or MAFK) and binds DNA motifs including the antioxidant response elements (AREs), which regulate expression of genes involved in oxidative stress response. Activates or represses expression of target genes, depending on the context. Plays a key role in cholesterol homeostasis by acting as a sensor of cholesterol excess: in low cholesterol conditions, translocates into the nucleus and represses expression of genes involved in defense against cholesterol excess. In excess cholesterol conditions, the endoplasmic reticulum membrane form of the protein directly binds cholesterol via its CRAC motif, preventing cleavage and release of the transcription factor NRF1, thereby allowing expression of genes promoting cholesterol removal. Critical for redox balance in response to oxidative stress: acts by binding the AREs motifs on promoters and mediating activation of oxidative stress response genes. Involved in proteasome homeostasis: in response to proteasome inhibition, mediates the 'bounce-back' of proteasome subunits by translocating into the nucleus and activating expression of genes encoding proteasome subunits. This Gallus gallus (Chicken) protein is Endoplasmic reticulum membrane sensor NFE2L1.